A 387-amino-acid polypeptide reads, in one-letter code: S-adenosylmethionine synthase (387 aa).

Residue His16 participates in ATP binding. Position 18 (Asp18) interacts with Mg(2+). Glu44 contributes to the K(+) binding site. Residues Glu57 and Gln100 each contribute to the L-methionine site. Residues 100-110 (QSPDIAQGVDE) form a flexible loop region. ATP contacts are provided by residues 167–169 (DAK), 232–233 (RF), Asp241, 247–248 (RK), Ala264, and Lys268. L-methionine is bound at residue Asp241. An L-methionine-binding site is contributed by Lys272.

This sequence belongs to the AdoMet synthase family. As to quaternary structure, homotetramer; dimer of dimers. Mg(2+) is required as a cofactor. The cofactor is K(+).

Its subcellular location is the cytoplasm. It carries out the reaction L-methionine + ATP + H2O = S-adenosyl-L-methionine + phosphate + diphosphate. It functions in the pathway amino-acid biosynthesis; S-adenosyl-L-methionine biosynthesis; S-adenosyl-L-methionine from L-methionine: step 1/1. Its function is as follows. Catalyzes the formation of S-adenosylmethionine (AdoMet) from methionine and ATP. The overall synthetic reaction is composed of two sequential steps, AdoMet formation and the subsequent tripolyphosphate hydrolysis which occurs prior to release of AdoMet from the enzyme. The protein is S-adenosylmethionine synthase of Janthinobacterium sp. (strain Marseille) (Minibacterium massiliensis).